The chain runs to 1694 residues: Protein TOPAZ1 (1694 aa).

Disordered stretches follow at residues 1–135 (MRRP…PGLD), 322–341 (EESSVGRKPRKRMKLSEKAD), 600–629 (ELSRSGSEVISNTTEDTQLTSETQSLTGNK), and 891–920 (ISQEEPNVAGEHQSTDSKYMETPVKKEPSD). A compositionally biased stretch (gly residues) spans 31–40 (GAAGGCGPEA). Residues 95–116 (SDPRGLEAAKEAELPLQTERHT) are compositionally biased toward basic and acidic residues. Residues 603–627 (RSGSEVISNTTEDTQLTSETQSLTG) are compositionally biased toward polar residues. Basic and acidic residues predominate over residues 903–920 (QSTDSKYMETPVKKEPSD).

The protein localises to the cytoplasm. The protein resides in the cytosol. In terms of biological role, important for normal spermatogenesis and male fertility. Specifically required for progression to the post-meiotic stages of spermatocyte development. Seems to be necessary for normal expression levels of a number of testis-expressed gene transcripts, although its role in this process is unclear. This is Protein TOPAZ1 (TOPAZ1) from Gorilla gorilla gorilla (Western lowland gorilla).